Reading from the N-terminus, the 346-residue chain is 3 beta-hydroxysteroid dehydrogenase/Delta 5--&gt;4-isomerase (346 aa).

Residue Tyr147 is the Proton acceptor of the active site. Position 151 (Lys151) interacts with NAD(+).

It belongs to the 3-beta-HSD family.

It catalyses the reaction a 3beta-hydroxy-Delta(5)-steroid + NAD(+) = a 3-oxo-Delta(5)-steroid + NADH + H(+). The enzyme catalyses a 3-oxo-Delta(5)-steroid = a 3-oxo-Delta(4)-steroid. Its pathway is lipid metabolism; steroid biosynthesis. Its function is as follows. Catalyzes the oxidative conversion of Delta(5)-ene-3-beta-hydroxy steroid, and the oxidative conversion of ketosteroids. The 3-beta-HSD enzymatic system plays a crucial role in the biosynthesis of all classes of hormonal steroids. During viral infection, steroid production contributes to virulence by inhibiting the host inflammatory response. The protein is 3 beta-hydroxysteroid dehydrogenase/Delta 5--&gt;4-isomerase (OPG174) of Monkeypox virus.